The following is a 427-amino-acid chain: Nucleolar and spindle-associated protein 1 (427 aa).

The tract at residues 41–190 is disordered; it reads AHLNPETRKE…LGNNKRTSAT (150 aa). Residues 43–55 are compositionally biased toward basic and acidic residues; the sequence is LNPETRKENKNQD. The span at 83 to 96 shows a compositional bias: basic residues; it reads TKTRRRRRKKHKTI. Over residues 119 to 128 the composition is skewed to low complexity; the sequence is NFQNQENQEN. At Ser139 the chain carries Phosphoserine. The segment covering 159–179 has biased composition (basic and acidic residues); the sequence is NDIKDSKKPLEKRSLCTDEFS. Positions 181–190 are enriched in polar residues; that stretch reads LGNNKRTSAT. Phosphothreonine is present on Thr191. A disordered region spans residues 235 to 312; it reads IVTPVPPRGR…QAVFRTPKSK (78 aa). The tract at residues 243–367 is interaction with microtubules; the sequence is GRLSVPCTPA…HKGKLKPWGQ (125 aa). Ser246 carries the phosphoserine modification. The residue at position 250 (Thr250) is a Phosphothreonine. Residues 252–264 show a composition bias toward polar residues; the sequence is ARQQCPQGHSATK. A Phosphoserine modification is found at Ser261. Phosphothreonine is present on residues Thr323 and Thr334. A phosphoserine mark is found at Ser337 and Ser348. The tract at residues 354–427 is disordered; it reads NYKPHKGKLK…RRNLGVTKAQ (74 aa). Positions 369–375 match the KEN box motif; it reads KENNSLN. A coiled-coil region spans residues 393 to 425; sequence LQTREERWKRQEQERKEKKEKLLEARRNLGVTK. The segment covering 394–419 has biased composition (basic and acidic residues); sequence QTREERWKRQEQERKEKKEKLLEARR.

Belongs to the NUSAP family. Interacts with DNA and microtubules. Microtubule bundling is inhibited by IPO7, KPNA2 and KPNB1 while association with DNA is also inhibited by IPO7 and KPNA2. Ubiquitinated. Ubiquitination by FZR1 may lead to proteasome-dependent degradation of this protein.

It localises to the cytoplasm. It is found in the nucleus. The protein localises to the nucleolus. Its subcellular location is the cytoskeleton. The protein resides in the spindle. It localises to the chromosome. In terms of biological role, microtubule-associated protein with the capacity to bundle and stabilize microtubules. May associate with chromosomes and promote the organization of mitotic spindle microtubules around them. The chain is Nucleolar and spindle-associated protein 1 (Nusap1) from Mus musculus (Mouse).